A 212-amino-acid polypeptide reads, in one-letter code: Orotate phosphoribosyltransferase (212 aa).

A 5-phospho-alpha-D-ribose 1-diphosphate-binding site is contributed by lysine 26. Orotate is bound at residue 34–35 (FF). 5-phospho-alpha-D-ribose 1-diphosphate-binding positions include 72–73 (YK), arginine 98, lysine 99, lysine 102, histidine 104, and 123–131 (DDVITAGTA). Positions 127 and 155 each coordinate orotate.

Belongs to the purine/pyrimidine phosphoribosyltransferase family. PyrE subfamily. As to quaternary structure, homodimer. Mg(2+) is required as a cofactor.

It catalyses the reaction orotidine 5'-phosphate + diphosphate = orotate + 5-phospho-alpha-D-ribose 1-diphosphate. It participates in pyrimidine metabolism; UMP biosynthesis via de novo pathway; UMP from orotate: step 1/2. In terms of biological role, catalyzes the transfer of a ribosyl phosphate group from 5-phosphoribose 1-diphosphate to orotate, leading to the formation of orotidine monophosphate (OMP). The sequence is that of Orotate phosphoribosyltransferase from Marinobacter nauticus (strain ATCC 700491 / DSM 11845 / VT8) (Marinobacter aquaeolei).